Reading from the N-terminus, the 409-residue chain is Argininosuccinate synthase (409 aa).

ATP contacts are provided by residues 12–20 and A39; that span reads AYSGGLDTS. Y91 provides a ligand contact to L-citrulline. Residue G121 coordinates ATP. L-aspartate is bound by residues T123, N127, and D128. Residue N127 coordinates L-citrulline. Positions 131, 180, 189, 265, and 277 each coordinate L-citrulline.

The protein belongs to the argininosuccinate synthase family. Type 1 subfamily. In terms of assembly, homotetramer.

The protein localises to the cytoplasm. It catalyses the reaction L-citrulline + L-aspartate + ATP = 2-(N(omega)-L-arginino)succinate + AMP + diphosphate + H(+). The protein operates within amino-acid biosynthesis; L-arginine biosynthesis; L-arginine from L-ornithine and carbamoyl phosphate: step 2/3. The protein is Argininosuccinate synthase of Buchnera aphidicola subsp. Baizongia pistaciae (strain Bp).